The primary structure comprises 108 residues: UPF0060 membrane protein Sputw3181_1172 (108 aa).

4 consecutive transmembrane segments (helical) span residues 3–23, 31–51, 63–83, and 87–107; these read VITTLGLFIITAIAEIVGCYL, GASAWVLLPAAISLALFAWLL, AAYGGVYVTIAIVWLWGVDGI, and RWDLAGVVLMLAGMAVIMFAP.

This sequence belongs to the UPF0060 family.

It localises to the cell inner membrane. The sequence is that of UPF0060 membrane protein Sputw3181_1172 from Shewanella sp. (strain W3-18-1).